A 257-amino-acid polypeptide reads, in one-letter code: Fructose-2,6-bisphosphatase TIGAR B (257 aa).

Histidine 11 (tele-phosphohistidine intermediate) is an active-site residue. Glutamate 89 acts as the Proton donor/acceptor in catalysis.

Belongs to the phosphoglycerate mutase family.

It localises to the cytoplasm. The protein resides in the nucleus. Its subcellular location is the mitochondrion. The enzyme catalyses beta-D-fructose 2,6-bisphosphate + H2O = beta-D-fructose 6-phosphate + phosphate. In terms of biological role, fructose-bisphosphatase hydrolyzing fructose-2,6-bisphosphate as well as fructose-1,6-bisphosphate. Acts as a negative regulator of glycolysis by lowering intracellular levels of fructose-2,6-bisphosphate in a p53/TP53-dependent manner, resulting in the pentose phosphate pathway (PPP) activation and NADPH production. Contributes to the generation of reduced glutathione to cause a decrease in intracellular reactive oxygen species (ROS) content, correlating with its ability to protect cells from oxidative or metabolic stress-induced cell death. May play a role in mitophagy inhibition. The chain is Fructose-2,6-bisphosphatase TIGAR B from Danio rerio (Zebrafish).